Consider the following 147-residue polypeptide: Sentan (147 aa).

The interval 1 to 32 (MGGCMHSTQDKSLHLEGDPNPSAAPTSTCAPR) is disordered. Positions 8-17 (TQDKSLHLEG) are enriched in basic and acidic residues.

The protein belongs to the S-100 family.

The protein localises to the cell projection. It is found in the cilium. Functionally, may be a component of the linker structure that bridges the ciliary membrane and peripheral singlet microtubules. In Homo sapiens (Human), this protein is Sentan (SNTN).